Consider the following 576-residue polypeptide: MKYFFQNKKNIHIKNETFNNRITILLSLIIITIILVLSRITFLQIIVSKKLIYKSNLRSLRTQIEFNQRGNITDRLGYPLAINIPVKNICIDPKLLFSKQTHIYPNLKWKMLSTVLSIPLSEIFYRIKYSKNNHFIYLAHKVNPEISEYISQLHIPGIYILDDFKRFYPFGKLTSQLIGFTNIDNEGIEGVEKSFNKLLMGKPGKKQIITDRYGRIIEQHNLVNKIQSHDIILSIDCSFQKFIYHILNQAVMSNKAKFGVAILVNIPTGEILSMVNTPSYDPNNSSELFKNNPLIRNKAITDIFELGSTVKPMIIMKALEKKIITPETVINTSSLVVNKHIIHDVSYHHALTASDILKKSSNTGVSRLALSIPISELIDIYSKFELGKSTNLGLIGERNGVLNTNKKHWSDLDKVTLSFGYGLMATPLQLARIYTTIGRYGLSKPLSIIVKNDTNLKNDIFSKQVFSKKIIKTVINMLEEVAKPGGAGFKAAIKGYRIAVKTGTAKKINSKGKYDNKYVSYIVGFAPVSNPTFCLMIMINEPKSNKYYGGEIAAPIFKTIMQKILKIKNIKPDAYL.

A helical membrane pass occupies residues 22-42; sequence ITILLSLIIITIILVLSRITF. The active-site Acyl-ester intermediate is S308.

This sequence belongs to the transpeptidase family. FtsI subfamily.

It is found in the cell inner membrane. It carries out the reaction Preferential cleavage: (Ac)2-L-Lys-D-Ala-|-D-Ala. Also transpeptidation of peptidyl-alanyl moieties that are N-acyl substituents of D-alanine.. It functions in the pathway cell wall biogenesis; peptidoglycan biosynthesis. Catalyzes cross-linking of the peptidoglycan cell wall at the division septum. This chain is Peptidoglycan D,D-transpeptidase FtsI, found in Buchnera aphidicola subsp. Baizongia pistaciae (strain Bp).